A 342-amino-acid polypeptide reads, in one-letter code: Metalloendoproteinase 4-MMP (342 aa).

The signal sequence occupies residues 1-34 (MHHHHHPCNRKPFTTIFSFFLLYLNLHNQQIIEA). The propeptide at 35 to 124 (RNPSQFTTNP…KTAPFHTGKK (90 aa)) is activation peptide. A Cysteine switch motif is present at residues 104 to 111 (PRCGFPDD). Residues Cys106 and His252 each contribute to the Zn(2+) site. The active site involves Glu253. The Zn(2+) site is built by His256 and His262. A glycan (N-linked (GlcNAc...) asparagine) is linked at Asn300. The GPI-anchor amidated aspartate moiety is linked to residue Asp317. The propeptide at 318-342 (GSRIRSQGMIYSTLSTVIALCFLNW) is removed in mature form.

This sequence belongs to the peptidase M10A family. Matrix metalloproteinases (MMPs) subfamily. The cofactor is Zn(2+). As to expression, mostly expressed in flowers and stems, and, to a lower extent, in leaves and roots.

It is found in the cell membrane. With respect to regulation, repressed by acetohydroxamic acid (AHA). Its function is as follows. Matrix metalloproteinases (MMPs) or matrixins may play a role in the degradation and remodeling of the extracellular matrix (ECM) during development or in response to stresses. Active on myelin basic protein (MBP) and, to some extent, on McaPLGLDpaAR-NH(2) (QF24) and beta-casein. The sequence is that of Metalloendoproteinase 4-MMP from Arabidopsis thaliana (Mouse-ear cress).